An 898-amino-acid polypeptide reads, in one-letter code: Serine/threonine-protein kinase TAO3 (898 aa).

In terms of domain architecture, Protein kinase spans 24–277; the sequence is FIDLHEIGHG…AVELLRHDFI (254 aa). Residues 30-38 and Lys-53 contribute to the ATP site; that span reads IGHGSFGAV. Asp-147 functions as the Proton acceptor in the catalytic mechanism. 2 disordered regions span residues 316–375 and 405–424; these read TRNG…DESS and DEAGHGDPRPEPRPTQSVQS. The residue at position 324 (Ser-324) is a Phosphoserine; by ATM. Phosphoserine occurs at positions 343, 346, and 349. The segment covering 349–366 has biased composition (low complexity); it reads SIPSTSVSTGSRSSSVNS. At Thr-357 the chain carries Phosphothreonine. The residue at position 359 (Ser-359) is a Phosphoserine. A compositionally biased stretch (basic and acidic residues) spans 405 to 416; that stretch reads DEAGHGDPRPEP. Ser-442 carries the phosphoserine modification. Coiled-coil stretches lie at residues 452-502, 548-649, and 754-871; these read EQEN…THAN, FLES…HAML, and LKTL…QERE. The disordered stretch occupies residues 565-596; it reads EEMNEDHSTPKKEKQERISKHKENLQHTQAEE. Lys-830 is modified (N6-acetyllysine).

Belongs to the protein kinase superfamily. STE Ser/Thr protein kinase family. STE20 subfamily. Self-associates. Interacts with ERN1 and TRAF2. Interaction with TRAF2 is facilitated under ER stress conditions, such as treatment with tunicamycin, and may promote TRAF2 phosphorylation. Interacts (via N-terminus) with STK25; the interaction promotes STK25 abundance at the level of protein expression and/or stability. Post-translationally, autophosphorylated. Phosphorylation at Ser-324 by ATM following DNA damage is required for activation of the p38/MAPK14 stress-activated MAPK cascade. Phosphorylated at Ser-324 and on Tyr residues during T cell activation. Phosphorylated by LRRK2.

The protein resides in the cytoplasm. The protein localises to the cell membrane. Its subcellular location is the membrane raft. It is found in the lipid droplet. The catalysed reaction is L-seryl-[protein] + ATP = O-phospho-L-seryl-[protein] + ADP + H(+). It catalyses the reaction L-threonyl-[protein] + ATP = O-phospho-L-threonyl-[protein] + ADP + H(+). Serine/threonine-protein kinase that acts as a regulator of the p38/MAPK14 stress-activated MAPK cascade and of the MAPK8/JNK cascade. In response to DNA damage, involved in the G2/M transition DNA damage checkpoint by activating the p38/MAPK14 stress-activated MAPK cascade, probably by mediating phosphorylation of upstream MAP2K3 and MAP2K6 kinases. Inhibits basal activity of the MAPK8/JNK cascade and diminishes its activation in response to epidermal growth factor (EGF). Positively regulates canonical T cell receptor (TCR) signaling by preventing early PTPN6/SHP1-mediated inactivation of LCK, ensuring sustained TCR signaling that is required for optimal activation and differentiation of T cells. Phosphorylates PTPN6/SHP1 on 'Thr-394', leading to its polyubiquitination and subsequent proteasomal degradation. Required for cell surface expression of metalloprotease ADAM10 on type 1 transitional B cells which is necessary for their NOTCH-mediated development into marginal zone B cells. Also required for the NOTCH-mediated terminal differentiation of splenic conventional type 2 dendritic cells. Positively regulates osteoblast differentiation by acting as an upstream activator of the JNK pathway. Promotes JNK signaling in hepatocytes and positively regulates hepatocyte lipid storage by inhibiting beta-oxidation and triacylglycerol secretion while enhancing lipid synthesis. Restricts age-associated inflammation by negatively regulating differentiation of macrophages and their production of pro-inflammatory cytokines. Plays a role in negatively regulating the abundance of regulatory T cells in white adipose tissue. The chain is Serine/threonine-protein kinase TAO3 (Taok3) from Mus musculus (Mouse).